The following is a 156-amino-acid chain: 6,7-dimethyl-8-ribityllumazine synthase (156 aa).

5-amino-6-(D-ribitylamino)uracil is bound by residues Phe-22, 57–59 (AVE), and 81–83 (CVI). Position 86 to 87 (86 to 87 (GT)) interacts with (2S)-2-hydroxy-3-oxobutyl phosphate. The active-site Proton donor is His-89. Residue Phe-114 participates in 5-amino-6-(D-ribitylamino)uracil binding. Arg-128 is a binding site for (2S)-2-hydroxy-3-oxobutyl phosphate.

The protein belongs to the DMRL synthase family. As to quaternary structure, forms an icosahedral capsid composed of 60 subunits, arranged as a dodecamer of pentamers.

The enzyme catalyses (2S)-2-hydroxy-3-oxobutyl phosphate + 5-amino-6-(D-ribitylamino)uracil = 6,7-dimethyl-8-(1-D-ribityl)lumazine + phosphate + 2 H2O + H(+). The protein operates within cofactor biosynthesis; riboflavin biosynthesis; riboflavin from 2-hydroxy-3-oxobutyl phosphate and 5-amino-6-(D-ribitylamino)uracil: step 1/2. Functionally, catalyzes the formation of 6,7-dimethyl-8-ribityllumazine by condensation of 5-amino-6-(D-ribitylamino)uracil with 3,4-dihydroxy-2-butanone 4-phosphate. This is the penultimate step in the biosynthesis of riboflavin. The chain is 6,7-dimethyl-8-ribityllumazine synthase from Vibrio cholerae serotype O1 (strain ATCC 39315 / El Tor Inaba N16961).